A 620-amino-acid polypeptide reads, in one-letter code: Probably inactive leucine-rich repeat receptor-like protein kinase At5g48380 (620 aa).

The first 27 residues, 1-27 (MMMGRLVFVIWLYNCLCLLLLSSLVDA), serve as a signal peptide directing secretion. Residues 28–228 (DQANIDCLRT…SASSSRGKVV (201 aa)) are Extracellular-facing. 4 N-linked (GlcNAc...) asparagine glycosylation sites follow: Asn56, Asn111, Asn119, and Asn147. 4 LRR repeats span residues 101 to 124 (DLTG…STLI), 126 to 148 (LVTI…ISNI), 150 to 172 (FLNT…LAQL), and 174 to 196 (RLKT…NQTL). The N-linked (GlcNAc...) asparagine glycan is linked to Asn193. The chain crosses the membrane as a helical span at residues 229–249 (IIAAVGGLTAAALVVGVVLFF). Over 250–620 (YFRKLGAVRK…DFIEELIVAR (371 aa)) the chain is Cytoplasmic. Thr300 carries the post-translational modification Phosphothreonine. The Protein kinase domain occupies 303–596 (FKKDNIIATG…RAIGESYNFT (294 aa)). ATP is bound by residues 309–317 (IATGRTGTM) and Lys331. A Phosphothreonine modification is found at Thr463. Residue Tyr479 is modified to Phosphotyrosine. Thr482 bears the Phosphothreonine mark.

This sequence belongs to the protein kinase superfamily. Ser/Thr protein kinase family.

Its subcellular location is the cell membrane. This Arabidopsis thaliana (Mouse-ear cress) protein is Probably inactive leucine-rich repeat receptor-like protein kinase At5g48380.